The sequence spans 348 residues: MGKTLKEVAEYLGGRVIGDENAVVGGLGTLDDAGEGQITFLANPKYAQKVATTRATAVILPPGAPGHGRNVIEVSNPYLAFAKLLTLFYVAPPKALGVMDGAVIGQGVAMGKDISIYPGAHVADGVKMGDRVTLYPGVVLYPGVELGSDVTLHANVVVRERCRIGNRVTVHSGTVIGTDGFGYAPDGKDWYKIPQIGIVILEDDVEIGSNAVIDRAALEATIIGRGTKIDNLVQIAHNCVIGENCMIVSQVGISGSTKVGNHVTMGGQVGVAGHIQIGDNVMVGAKSGVPGNIPANQIVSGIPAFAHRDWLKASSVFPRLPEHRKTLASLEKRVQELEEKLKADEKVK.

His237 serves as the catalytic Proton acceptor.

The protein belongs to the transferase hexapeptide repeat family. LpxD subfamily. Homotrimer.

It catalyses the reaction a UDP-3-O-[(3R)-3-hydroxyacyl]-alpha-D-glucosamine + a (3R)-hydroxyacyl-[ACP] = a UDP-2-N,3-O-bis[(3R)-3-hydroxyacyl]-alpha-D-glucosamine + holo-[ACP] + H(+). Its pathway is bacterial outer membrane biogenesis; LPS lipid A biosynthesis. Its function is as follows. Catalyzes the N-acylation of UDP-3-O-acylglucosamine using 3-hydroxyacyl-ACP as the acyl donor. Is involved in the biosynthesis of lipid A, a phosphorylated glycolipid that anchors the lipopolysaccharide to the outer membrane of the cell. The chain is UDP-3-O-acylglucosamine N-acyltransferase from Geotalea daltonii (strain DSM 22248 / JCM 15807 / FRC-32) (Geobacter daltonii).